The following is a 467-amino-acid chain: Chromosomal replication initiator protein DnaA (467 aa).

A domain I, interacts with DnaA modulators region spans residues 1–90 (MSLSLWQQCL…KSVTQTPQAA (90 aa)). Residues 91–130 (VTSNVAAPAQVAQTQPQRAAPSTRSGWDNVPAPAEPTYRS) form a domain II region. The segment covering 97-111 (APAQVAQTQPQRAAP) has biased composition (low complexity). Residues 97 to 119 (APAQVAQTQPQRAAPSTRSGWDN) form a disordered region. A domain III, AAA+ region region spans residues 131–347 (NVNVKHTFDN…GALNRVIANA (217 aa)). 4 residues coordinate ATP: glycine 175, glycine 177, lysine 178, and threonine 179. Residues 348 to 467 (NFTGRAITID…FSNLIRTLSS (120 aa)) form a domain IV, binds dsDNA region.

It belongs to the DnaA family. Oligomerizes as a right-handed, spiral filament on DNA at oriC.

The protein resides in the cytoplasm. Its function is as follows. Plays an essential role in the initiation and regulation of chromosomal replication. ATP-DnaA binds to the origin of replication (oriC) to initiate formation of the DNA replication initiation complex once per cell cycle. Binds the DnaA box (a 9 base pair repeat at the origin) and separates the double-stranded (ds)DNA. Forms a right-handed helical filament on oriC DNA; dsDNA binds to the exterior of the filament while single-stranded (ss)DNA is stabiized in the filament's interior. The ATP-DnaA-oriC complex binds and stabilizes one strand of the AT-rich DNA unwinding element (DUE), permitting loading of DNA polymerase. After initiation quickly degrades to an ADP-DnaA complex that is not apt for DNA replication. Binds acidic phospholipids. In Escherichia coli O157:H7, this protein is Chromosomal replication initiator protein DnaA.